A 182-amino-acid polypeptide reads, in one-letter code: MTSNLNLMAPPRGWEAKYESDGGGVITTSVDQTVNWLLNWGRSNSVWYMLFGLACCAIELMQTGGPRGDLERFGAAPRPSPRSSDLFIIAGTLTYKMATRVKRLYDQMSEPRFVISMGSCSNCGGLFQYAYSVCKGVDQIIPVDVYVPGCPPRPEALLEGLLKIQEKIKSERALGRRGATGG.

Positions 55, 56, 120, and 150 each coordinate [4Fe-4S] cluster.

It belongs to the complex I 20 kDa subunit family. In terms of assembly, NDH-1 is composed of 14 different subunits. Subunits NuoB, C, D, E, F, and G constitute the peripheral sector of the complex. Requires [4Fe-4S] cluster as cofactor.

Its subcellular location is the cell inner membrane. The enzyme catalyses a quinone + NADH + 5 H(+)(in) = a quinol + NAD(+) + 4 H(+)(out). In terms of biological role, NDH-1 shuttles electrons from NADH, via FMN and iron-sulfur (Fe-S) centers, to quinones in the respiratory chain. The immediate electron acceptor for the enzyme in this species is believed to be ubiquinone. Couples the redox reaction to proton translocation (for every two electrons transferred, four hydrogen ions are translocated across the cytoplasmic membrane), and thus conserves the redox energy in a proton gradient. In Sorangium cellulosum (strain So ce56) (Polyangium cellulosum (strain So ce56)), this protein is NADH-quinone oxidoreductase subunit B 2.